An 86-amino-acid chain; its full sequence is Small ribosomal subunit protein uS15 (86 aa).

The protein belongs to the universal ribosomal protein uS15 family. In terms of assembly, part of the 30S ribosomal subunit. Forms a bridge to the 50S subunit in the 70S ribosome, contacting the 23S rRNA.

Its function is as follows. One of the primary rRNA binding proteins, it binds directly to 16S rRNA where it helps nucleate assembly of the platform of the 30S subunit by binding and bridging several RNA helices of the 16S rRNA. Functionally, forms an intersubunit bridge (bridge B4) with the 23S rRNA of the 50S subunit in the ribosome. The polypeptide is Small ribosomal subunit protein uS15 (Neorickettsia sennetsu (strain ATCC VR-367 / Miyayama) (Ehrlichia sennetsu)).